The sequence spans 773 residues: C-Maf-inducing protein (773 aa).

The interval 1 to 28 (MDVTSSSGGGDPRQIEETKPLLGSDVSG) is disordered. One can recognise a PH domain in the interval 54–163 (LLQEGDIQVC…HSLQWKKKIY (110 aa)). Phosphoserine occurs at positions 349, 377, 382, and 660. 4 LRR repeats span residues 663–686 (NLENLSLAFTNVTSACAEHLIKLP), 687–707 (SLKQLNLWSTQFGDAGLRLLS), 712–732 (MLQVLNLCETPVTDAGLLALS), and 736–756 (SLCSLNMNSTKLSADTYEDLK).

Interacts with FLNA.

The protein resides in the nucleus. It localises to the cytoplasm. Functionally, plays a role in T-cell signaling pathway. The polypeptide is C-Maf-inducing protein (Cmip) (Mus musculus (Mouse)).